Here is a 324-residue protein sequence, read N- to C-terminus: Zinc metalloproteinase leucurolysin-B (324 aa).

Residues 1-119 form the Peptidase M12B domain; it reads DTVLLNRISH…LNPQCILNEP (119 aa). Asp11 lines the Ca(2+) pocket. Cystine bridges form between Cys34/Cys114, Cys74/Cys98, and Cys76/Cys81. Residue His59 participates in Zn(2+) binding. Glu60 is an active-site residue. The Zn(2+) site is built by His63 and His69. N-linked (GlcNAc...) asparagine glycosylation is present at Asn97. The Ca(2+) site is built by Cys114, Asn117, Val129, Asn132, Leu134, Glu136, Glu139, and Asp142. The Disintegrin domain occupies 127 to 213; it reads PPVCGNELLE…QCPTDDFKRN (87 aa). Disulfide bonds link Cys130–Cys159, Cys141–Cys154, Cys143–Cys149, Cys153–Cys176, Cys167–Cys173, Cys172–Cys198, Cys185–Cys205, Cys192–Cys224, Cys217–Cys229, Cys236–Cys286, Cys251–Cys295, Cys264–Cys274, and Cys281–Cys315. The short motif at 191-193 is the D/ECD-tripeptide element; it reads ECD. 2 N-linked (GlcNAc...) asparagine glycosylation sites follow: Asn296 and Asn305.

The protein belongs to the venom metalloproteinase (M12B) family. P-III subfamily. P-IIIa sub-subfamily. Monomer. The cofactor is Zn(2+). In terms of processing, N-glycosylated. The N-terminus is blocked. In terms of tissue distribution, expressed by the venom gland.

Its subcellular location is the secreted. Its activity is regulated as follows. Inhibited by EDTA, but not by PMSF. Pre-incubation with 2 mM DTT completely abolishes activity. In terms of biological role, snake venom zinc metalloproteinase that acts as a potent hemorrhagic toxin. Hydrolyzes the insulin B chain at the 14-Ala-|-Leu-15 bond but not the 16-Tyr-|-Leu-17 bond. Degrades the alpha-chain of fibrin and hydrolyzes the Aalpha-chain of fibrinogen (FGA) while leaving the beta and gamma chains unaffected. Degrades type-I collagen and its gelatin. Degrades the alpha-1 chain of type-IV collagen and its gelatin but not the alpha-2 chain. Degrades plasma fibronectin, plasma vitronectin and basement membrane enactin. It inhibits collagen-induced platelet aggregation. This Bothrops leucurus (Whitetail lancehead) protein is Zinc metalloproteinase leucurolysin-B.